The following is a 185-amino-acid chain: Threonylcarbamoyl-AMP synthase (185 aa).

Residues methionine 1–glycine 185 enclose the YrdC-like domain.

It belongs to the SUA5 family. TsaC subfamily.

It localises to the cytoplasm. It catalyses the reaction L-threonine + hydrogencarbonate + ATP = L-threonylcarbamoyladenylate + diphosphate + H2O. In terms of biological role, required for the formation of a threonylcarbamoyl group on adenosine at position 37 (t(6)A37) in tRNAs that read codons beginning with adenine. Catalyzes the conversion of L-threonine, HCO(3)(-)/CO(2) and ATP to give threonylcarbamoyl-AMP (TC-AMP) as the acyladenylate intermediate, with the release of diphosphate. This is Threonylcarbamoyl-AMP synthase from Photobacterium profundum (strain SS9).